A 55-amino-acid chain; its full sequence is Large ribosomal subunit protein bL33A (55 aa).

The protein belongs to the bacterial ribosomal protein bL33 family.

The polypeptide is Large ribosomal subunit protein bL33A (Rhodococcus jostii (strain RHA1)).